The following is a 146-amino-acid chain: Coactosin (146 aa).

An ADF-H domain is found at 1–132 (MADVSSTELK…NEEELMTKVR (132 aa)).

The protein belongs to the actin-binding proteins ADF family. Coactosin subfamily. The N-terminus is blocked.

The protein localises to the cytoplasm. It is found in the cytoskeleton. In terms of biological role, binds to F-actin in a calcium independent manner. Binds to the filaments along their length. The sequence is that of Coactosin (coaA) from Dictyostelium discoideum (Social amoeba).